A 342-amino-acid polypeptide reads, in one-letter code: Nucleoid-associated protein Sputcn32_2288 (342 aa).

It belongs to the YejK family.

It is found in the cytoplasm. It localises to the nucleoid. The polypeptide is Nucleoid-associated protein Sputcn32_2288 (Shewanella putrefaciens (strain CN-32 / ATCC BAA-453)).